Here is a 567-residue protein sequence, read N- to C-terminus: Oxygen-dependent choline dehydrogenase (567 aa).

An FAD-binding site is contributed by 6-35 (DYIIVGAGSAGNTLATRLTEDEGVTVLLLE). Residues 182 to 203 (QQEGFGPMDRTVTPKGRRASTA) form a disordered region. The Proton acceptor role is filled by H475.

This sequence belongs to the GMC oxidoreductase family. Requires FAD as cofactor.

It carries out the reaction choline + A = betaine aldehyde + AH2. It catalyses the reaction betaine aldehyde + NAD(+) + H2O = glycine betaine + NADH + 2 H(+). It functions in the pathway amine and polyamine biosynthesis; betaine biosynthesis via choline pathway; betaine aldehyde from choline (cytochrome c reductase route): step 1/1. In terms of biological role, involved in the biosynthesis of the osmoprotectant glycine betaine. Catalyzes the oxidation of choline to betaine aldehyde and betaine aldehyde to glycine betaine at the same rate. This Pseudomonas fluorescens (strain ATCC BAA-477 / NRRL B-23932 / Pf-5) protein is Oxygen-dependent choline dehydrogenase.